We begin with the raw amino-acid sequence, 556 residues long: Formate--tetrahydrofolate ligase (556 aa).

ATP is bound at residue 65 to 72; sequence TPAGEGKT.

Belongs to the formate--tetrahydrofolate ligase family.

It catalyses the reaction (6S)-5,6,7,8-tetrahydrofolate + formate + ATP = (6R)-10-formyltetrahydrofolate + ADP + phosphate. The protein operates within one-carbon metabolism; tetrahydrofolate interconversion. The protein is Formate--tetrahydrofolate ligase of Ruminiclostridium cellulolyticum (strain ATCC 35319 / DSM 5812 / JCM 6584 / H10) (Clostridium cellulolyticum).